A 187-amino-acid chain; its full sequence is Photosystem I assembly protein Ycf4 (187 aa).

A run of 2 helical transmembrane segments spans residues 25 to 45 (YLWAIIVTMGGIGFLLSGISS) and 69 to 89 (MSFYGLLGTIYGIFLWLTVIW).

This sequence belongs to the Ycf4 family.

Its subcellular location is the cellular thylakoid membrane. Functionally, seems to be required for the assembly of the photosystem I complex. This is Photosystem I assembly protein Ycf4 from Trichodesmium erythraeum (strain IMS101).